A 225-amino-acid polypeptide reads, in one-letter code: Octanoyltransferase (225 aa).

The region spanning 43–225 (GTAPELVWLL…KTFRDVFGRG (183 aa)) is the BPL/LPL catalytic domain. Residues 82 to 89 (RGGQYTYH), 157 to 159 (AIG), and 170 to 172 (GVS) each bind substrate. Catalysis depends on cysteine 188, which acts as the Acyl-thioester intermediate.

The protein belongs to the LipB family.

It is found in the cytoplasm. The catalysed reaction is octanoyl-[ACP] + L-lysyl-[protein] = N(6)-octanoyl-L-lysyl-[protein] + holo-[ACP] + H(+). Its pathway is protein modification; protein lipoylation via endogenous pathway; protein N(6)-(lipoyl)lysine from octanoyl-[acyl-carrier-protein]: step 1/2. In terms of biological role, catalyzes the transfer of endogenously produced octanoic acid from octanoyl-acyl-carrier-protein onto the lipoyl domains of lipoate-dependent enzymes. Lipoyl-ACP can also act as a substrate although octanoyl-ACP is likely to be the physiological substrate. This chain is Octanoyltransferase, found in Parvibaculum lavamentivorans (strain DS-1 / DSM 13023 / NCIMB 13966).